The following is a 378-amino-acid chain: Carbamoyl phosphate synthase small chain (378 aa).

The tract at residues methionine 1 to glutamate 189 is CPSase. Residues serine 47, glycine 241, and glycine 243 each contribute to the L-glutamine site. A Glutamine amidotransferase type-1 domain is found at histidine 193–arginine 378. Cysteine 269 acts as the Nucleophile in catalysis. Leucine 270, glutamine 273, asparagine 311, glycine 313, and phenylalanine 314 together coordinate L-glutamine. Active-site residues include histidine 353 and glutamate 355.

Belongs to the CarA family. Composed of two chains; the small (or glutamine) chain promotes the hydrolysis of glutamine to ammonia, which is used by the large (or ammonia) chain to synthesize carbamoyl phosphate. Tetramer of heterodimers (alpha,beta)4.

It catalyses the reaction hydrogencarbonate + L-glutamine + 2 ATP + H2O = carbamoyl phosphate + L-glutamate + 2 ADP + phosphate + 2 H(+). It carries out the reaction L-glutamine + H2O = L-glutamate + NH4(+). It participates in amino-acid biosynthesis; L-arginine biosynthesis; carbamoyl phosphate from bicarbonate: step 1/1. Its pathway is pyrimidine metabolism; UMP biosynthesis via de novo pathway; (S)-dihydroorotate from bicarbonate: step 1/3. In terms of biological role, small subunit of the glutamine-dependent carbamoyl phosphate synthetase (CPSase). CPSase catalyzes the formation of carbamoyl phosphate from the ammonia moiety of glutamine, carbonate, and phosphate donated by ATP, constituting the first step of 2 biosynthetic pathways, one leading to arginine and/or urea and the other to pyrimidine nucleotides. The small subunit (glutamine amidotransferase) binds and cleaves glutamine to supply the large subunit with the substrate ammonia. This chain is Carbamoyl phosphate synthase small chain, found in Pseudomonas aeruginosa (strain ATCC 15692 / DSM 22644 / CIP 104116 / JCM 14847 / LMG 12228 / 1C / PRS 101 / PAO1).